The following is a 359-amino-acid chain: Peptide chain release factor 1 (359 aa).

Glutamine 235 carries the post-translational modification N5-methylglutamine. A disordered region spans residues 280 to 306 (AERQRADSERSADRKSQVGSGDRSERI).

The protein belongs to the prokaryotic/mitochondrial release factor family. Post-translationally, methylated by PrmC. Methylation increases the termination efficiency of RF1.

Its subcellular location is the cytoplasm. Its function is as follows. Peptide chain release factor 1 directs the termination of translation in response to the peptide chain termination codons UAG and UAA. The protein is Peptide chain release factor 1 of Rhizobium leguminosarum bv. trifolii (strain WSM2304).